We begin with the raw amino-acid sequence, 76 residues long: Omega-scoloptoxin(15)-Ssd3c (76 aa).

The signal sequence occupies residues 1–23 (MEKKIIFLVVLVALLALPEFISS).

This sequence belongs to the scoloptoxin-15 family. Post-translationally, contains 2 disulfide bonds. As to expression, expressed by the venom gland.

The protein localises to the secreted. Voltage-gated calcium channel inhibitor (Cav) (8.6% block at 10 nM), when tested on DRG neurons. In Scolopendra dehaani (Thai centipede), this protein is Omega-scoloptoxin(15)-Ssd3c.